A 202-amino-acid chain; its full sequence is Inner membrane-spanning protein YciB (202 aa).

The next 6 membrane-spanning stretches (helical) occupy residues 3 to 23, 46 to 66, 73 to 93, 100 to 120, 145 to 165, and 173 to 193; these read ILFDLLPVILFFVAYKIAGGN, ILLATAVAILATIAQIGWVWM, TMLWISLAIIAVFGGATLFFH, WKPTALYWLFGGTLTVSAVIF, LAWAGFFILMGFLNLYVAYNF, and FKLFGGMGLMLLFVLGQGFYL.

The protein belongs to the YciB family.

It localises to the cell inner membrane. Plays a role in cell envelope biogenesis, maintenance of cell envelope integrity and membrane homeostasis. The polypeptide is Inner membrane-spanning protein YciB (Aromatoleum aromaticum (strain DSM 19018 / LMG 30748 / EbN1) (Azoarcus sp. (strain EbN1))).